We begin with the raw amino-acid sequence, 445 residues long: UPF0210 protein Sez_0396 (445 aa).

This sequence belongs to the UPF0210 family. As to quaternary structure, homodimer.

The sequence is that of UPF0210 protein Sez_0396 from Streptococcus equi subsp. zooepidemicus (strain MGCS10565).